Reading from the N-terminus, the 354-residue chain is Probable L-ascorbate-6-phosphate lactonase UlaG (354 aa).

It belongs to the UlaG family. The cofactor is a divalent metal cation.

Its subcellular location is the cytoplasm. It catalyses the reaction L-ascorbate 6-phosphate + H2O = 3-dehydro-L-gulonate 6-phosphate. It participates in cofactor degradation; L-ascorbate degradation; D-xylulose 5-phosphate from L-ascorbate: step 1/4. Its function is as follows. Probably catalyzes the hydrolysis of L-ascorbate-6-P into 3-keto-L-gulonate-6-P. Is essential for L-ascorbate utilization under anaerobic conditions. This chain is Probable L-ascorbate-6-phosphate lactonase UlaG, found in Shigella boydii serotype 4 (strain Sb227).